Here is a 251-residue protein sequence, read N- to C-terminus: NADPH-dependent oxidoreductase (251 aa).

This sequence belongs to the flavin oxidoreductase frp family. FMN is required as a cofactor.

Functionally, reduces FMN, organic nitro compounds and disulfide DTNB. Involved in maintenance of the cellular redox state and the disulfide stress response. The polypeptide is NADPH-dependent oxidoreductase (nfrA) (Staphylococcus aureus (strain USA300)).